Here is a 213-residue protein sequence, read N- to C-terminus: Golgi SNAP receptor complex member 2 homolog memb-1 (213 aa).

Topologically, residues 1 to 189 (MEALYQSTNF…QVIDRRVRED (189 aa)) are cytoplasmic. Residues 190–210 (WILFVIGCIVCCIFMYAFYRF) traverse the membrane as a helical; Anchor for type IV membrane protein segment. The Vesicular portion of the chain corresponds to 211–213 (WRG).

Belongs to the GOSR2 family. Part of a unique SNARE complex.

The protein resides in the golgi apparatus. It is found in the cis-Golgi network membrane. It localises to the golgi apparatus membrane. Its subcellular location is the endoplasmic reticulum membrane. Functionally, involved in transport of proteins from the cis/medial-Golgi to the trans-Golgi network. This chain is Golgi SNAP receptor complex member 2 homolog memb-1, found in Caenorhabditis elegans.